A 36-amino-acid polypeptide reads, in one-letter code: Kappa-theraphotoxin-Aa1a (36 aa).

Disulfide bonds link cysteine 3/cysteine 18, cysteine 10/cysteine 23, and cysteine 17/cysteine 30. Residue isoleucine 36 is modified to Isoleucine amide.

It belongs to the neurotoxin 10 (Hwtx-1) family. In terms of tissue distribution, expressed by the venom gland.

Its subcellular location is the secreted. In terms of biological role, selective inhibitor of voltage-gated potassium channel Kv10.1/KCNH1/EAG1 (IC(50)=637 nM). It acts by shifting the voltage dependence of channel activation in a depolarising direction. It shows a 100% inhibition at saturating concentrations, shows fast on-rates and is reversible. It also slightly affects channel inactivation, when the membrane is highly depolarised (&gt;+80 mV). This chain is Kappa-theraphotoxin-Aa1a, found in Avicularia aurantiaca (Yellow-banded pinktoe tarantula).